We begin with the raw amino-acid sequence, 234 residues long: MGTAFKKFCIKFCCCCCCEDEDEEEKAPLIGHDTLDYFDREAKKRRDQETNLWSEPGDPSHSERDDDRVLYKLLQCRQQTQPGSRGYRRLSIDIEAMRDVRREVRDKWKMILENLGFMAEAESLLNVSASASYDRMRNAASARSLLQTLHTETSLFNSKEPPPERYLFILDRLIYLDAAEDFVAKARRFYPPKDDDEEEESNPLGINLPLLLSRMNQNISGGEDEDEDESEPDD.

The segment at 215–234 (MNQNISGGEDEDEDESEPDD) is disordered. Acidic residues predominate over residues 222 to 234 (GEDEDEDESEPDD).

It belongs to the melanoregulin family.

It localises to the apical cell membrane. Its subcellular location is the melanosome membrane. The protein resides in the lysosome membrane. The protein localises to the cytoplasmic vesicle membrane. In terms of biological role, probably functions as a cargo-recognition protein that couples cytoplasmic vesicles to the transport machinery. Contributes to retrograde melanosome transport from the cell periphery to the center. Overexpression causes accumulation of late endosomes and/or lysosomes at the microtubule organising center (MTOC) at the center of the cell. Probably binds cholesterol and requires the presence of cholesterol in membranes to function in microtubule-mediated retrograde organelle transport. Binds phosphatidylinositol 3-phosphate, phosphatidylinositol 4-phosphate, phosphatidylinositol 5-phosphate and phosphatidylinositol 3,5-bisphosphate. This chain is Melanoregulin (mreg), found in Danio rerio (Zebrafish).